A 701-amino-acid chain; its full sequence is Elongation factor G (701 aa).

A tr-type G domain is found at 8–290; it reads KHYRNIGISA…AVIEYLPAPI (283 aa). Residues 17–24, 88–92, and 142–145 each bind GTP; these read AHIDAGKT, DTPGH, and NKMD.

The protein belongs to the TRAFAC class translation factor GTPase superfamily. Classic translation factor GTPase family. EF-G/EF-2 subfamily.

The protein localises to the cytoplasm. Functionally, catalyzes the GTP-dependent ribosomal translocation step during translation elongation. During this step, the ribosome changes from the pre-translocational (PRE) to the post-translocational (POST) state as the newly formed A-site-bound peptidyl-tRNA and P-site-bound deacylated tRNA move to the P and E sites, respectively. Catalyzes the coordinated movement of the two tRNA molecules, the mRNA and conformational changes in the ribosome. This chain is Elongation factor G, found in Hamiltonella defensa subsp. Acyrthosiphon pisum (strain 5AT).